The sequence spans 113 residues: Large ribosomal subunit protein bL19 (113 aa).

The protein belongs to the bacterial ribosomal protein bL19 family.

Functionally, this protein is located at the 30S-50S ribosomal subunit interface and may play a role in the structure and function of the aminoacyl-tRNA binding site. The sequence is that of Large ribosomal subunit protein bL19 from Mycobacterium marinum (strain ATCC BAA-535 / M).